The primary structure comprises 320 residues: ATP-dependent 6-phosphofructokinase (320 aa).

Glycine 12 contacts ATP. ADP is bound at residue 22 to 26 (RGVVR). ATP contacts are provided by residues 73–74 (RF) and 103–106 (GDGS). Aspartate 104 contacts Mg(2+). 126–128 (TID) lines the substrate pocket. Residue aspartate 128 is the Proton acceptor of the active site. Arginine 155 contacts ADP. Substrate is bound by residues arginine 163 and 170 to 172 (MGR). ADP-binding positions include 186–188 (GCE), lysine 212, and 214–216 (KKH). Substrate is bound by residues glutamate 223, arginine 244, and 250-253 (HIQR).

Belongs to the phosphofructokinase type A (PFKA) family. ATP-dependent PFK group I subfamily. Prokaryotic clade 'B1' sub-subfamily. Homotetramer. The cofactor is Mg(2+).

The protein localises to the cytoplasm. It catalyses the reaction beta-D-fructose 6-phosphate + ATP = beta-D-fructose 1,6-bisphosphate + ADP + H(+). It functions in the pathway carbohydrate degradation; glycolysis; D-glyceraldehyde 3-phosphate and glycerone phosphate from D-glucose: step 3/4. Allosterically activated by ADP and other diphosphonucleosides, and allosterically inhibited by phosphoenolpyruvate. In terms of biological role, catalyzes the phosphorylation of D-fructose 6-phosphate to fructose 1,6-bisphosphate by ATP, the first committing step of glycolysis. The chain is ATP-dependent 6-phosphofructokinase from Edwardsiella ictaluri (strain 93-146).